The primary structure comprises 468 residues: Glutamate--tRNA ligase (468 aa).

The 'HIGH' region motif lies at 9 to 19 (PSPTGSIHIGN). A 'KMSKS' region motif is present at residues 239 to 243 (KLSKR). Lysine 242 serves as a coordination point for ATP.

It belongs to the class-I aminoacyl-tRNA synthetase family. Glutamate--tRNA ligase type 1 subfamily. In terms of assembly, monomer.

The protein localises to the cytoplasm. It carries out the reaction tRNA(Glu) + L-glutamate + ATP = L-glutamyl-tRNA(Glu) + AMP + diphosphate. Catalyzes the attachment of glutamate to tRNA(Glu) in a two-step reaction: glutamate is first activated by ATP to form Glu-AMP and then transferred to the acceptor end of tRNA(Glu). The protein is Glutamate--tRNA ligase of Blochmanniella pennsylvanica (strain BPEN).